We begin with the raw amino-acid sequence, 242 residues long: Myogenic factor 6 (242 aa).

The tract at residues 31 to 63 is disordered; sequence SPLYPGSDGTLSPCQDQMPQEAGSDSSGEEHVL. Over residues 39 to 56 the composition is skewed to polar residues; it reads GTLSPCQDQMPQEAGSDS. Residues 93-144 form the bHLH domain; that stretch reads DRRKAATLRERRRLKKINEAFEALKRRTVANPNQRLPKVEILRSAISYIERL.

In terms of assembly, efficient DNA binding requires dimerization with another bHLH protein. Interacts with CSRP3. As to expression, skeletal muscle.

The protein resides in the nucleus. Involved in muscle differentiation (myogenic factor). Induces fibroblasts to differentiate into myoblasts. Probable sequence specific DNA-binding protein. The chain is Myogenic factor 6 (Myf6) from Mus musculus (Mouse).